The sequence spans 67 residues: Light-harvesting protein B-870 alpha chain (67 aa).

The Cytoplasmic portion of the chain corresponds to 1–12 (MWRIWRLFDPMR). The chain crosses the membrane as a helical span at residues 13-33 (AMVAQAVFLLGLAVLIHLMLL). An a bacteriochlorophyll-binding site is contributed by H29. At 34–67 (GTNKYNWLDGAKKAPVATAVAPVPAEVTSLAQAK) the chain is on the periplasmic side.

It belongs to the antenna complex alpha subunit family. As to quaternary structure, an alpha/beta heterodimer. The core complex is formed by different alpha and beta chains, binding bacteriochlorophyll molecules, and arranged most probably in tetrameric structures disposed around the reaction center. The non-pigmented gamma chains may constitute additional components.

The protein localises to the cell inner membrane. Antenna complexes are light-harvesting systems, which transfer the excitation energy to the reaction centers. The polypeptide is Light-harvesting protein B-870 alpha chain (pufA) (Rubrivivax gelatinosus (strain NBRC 100245 / IL144)).